We begin with the raw amino-acid sequence, 127 residues long: Aspartate 1-decarboxylase (127 aa).

The active-site Schiff-base intermediate with substrate; via pyruvic acid is Ser-25. Residue Ser-25 is modified to Pyruvic acid (Ser). Residue Thr-57 participates in substrate binding. The Proton donor role is filled by Tyr-58. Position 73-75 (73-75 (GAA)) interacts with substrate.

It belongs to the PanD family. In terms of assembly, heterooctamer of four alpha and four beta subunits. It depends on pyruvate as a cofactor. Is synthesized initially as an inactive proenzyme, which is activated by self-cleavage at a specific serine bond to produce a beta-subunit with a hydroxyl group at its C-terminus and an alpha-subunit with a pyruvoyl group at its N-terminus.

The protein resides in the cytoplasm. It carries out the reaction L-aspartate + H(+) = beta-alanine + CO2. It participates in cofactor biosynthesis; (R)-pantothenate biosynthesis; beta-alanine from L-aspartate: step 1/1. Functionally, catalyzes the pyruvoyl-dependent decarboxylation of aspartate to produce beta-alanine. The protein is Aspartate 1-decarboxylase of Bacillus cereus (strain ATCC 10987 / NRS 248).